The following is a 206-amino-acid chain: Large ribosomal subunit protein uL3 (206 aa).

Positions 122 to 154 are disordered; that stretch reads VVKRHGHAGGPGGHGSRFHRHPGSMGANSTPSR.

Belongs to the universal ribosomal protein uL3 family. Part of the 50S ribosomal subunit. Forms a cluster with proteins L14 and L19.

Its function is as follows. One of the primary rRNA binding proteins, it binds directly near the 3'-end of the 23S rRNA, where it nucleates assembly of the 50S subunit. This Leptospira borgpetersenii serovar Hardjo-bovis (strain JB197) protein is Large ribosomal subunit protein uL3.